The following is a 424-amino-acid chain: Serine--tRNA ligase (424 aa).

230-232 provides a ligand contact to L-serine; that stretch reads TAE. ATP is bound at residue 261–263; it reads RSE. L-serine is bound at residue E284. 348–351 serves as a coordination point for ATP; sequence EISS. Residue S384 participates in L-serine binding.

The protein belongs to the class-II aminoacyl-tRNA synthetase family. Type-1 seryl-tRNA synthetase subfamily. As to quaternary structure, homodimer. The tRNA molecule binds across the dimer.

The protein resides in the cytoplasm. It catalyses the reaction tRNA(Ser) + L-serine + ATP = L-seryl-tRNA(Ser) + AMP + diphosphate + H(+). It carries out the reaction tRNA(Sec) + L-serine + ATP = L-seryl-tRNA(Sec) + AMP + diphosphate + H(+). It participates in aminoacyl-tRNA biosynthesis; selenocysteinyl-tRNA(Sec) biosynthesis; L-seryl-tRNA(Sec) from L-serine and tRNA(Sec): step 1/1. Catalyzes the attachment of serine to tRNA(Ser). Is also able to aminoacylate tRNA(Sec) with serine, to form the misacylated tRNA L-seryl-tRNA(Sec), which will be further converted into selenocysteinyl-tRNA(Sec). This is Serine--tRNA ligase from Streptococcus pneumoniae serotype 2 (strain D39 / NCTC 7466).